The sequence spans 901 residues: Protein translocase subunit SecA (901 aa).

ATP contacts are provided by residues glutamine 87, 105-109, and aspartate 512; that span reads GEGKT. Zn(2+) contacts are provided by cysteine 885, cysteine 887, cysteine 896, and histidine 897.

The protein belongs to the SecA family. As to quaternary structure, monomer and homodimer. Part of the essential Sec protein translocation apparatus which comprises SecA, SecYEG and auxiliary proteins SecDF-YajC and YidC. The cofactor is Zn(2+).

Its subcellular location is the cell inner membrane. The protein resides in the cytoplasm. It carries out the reaction ATP + H2O + cellular proteinSide 1 = ADP + phosphate + cellular proteinSide 2.. Functionally, part of the Sec protein translocase complex. Interacts with the SecYEG preprotein conducting channel. Has a central role in coupling the hydrolysis of ATP to the transfer of proteins into and across the cell membrane, serving both as a receptor for the preprotein-SecB complex and as an ATP-driven molecular motor driving the stepwise translocation of polypeptide chains across the membrane. This Salmonella arizonae (strain ATCC BAA-731 / CDC346-86 / RSK2980) protein is Protein translocase subunit SecA.